The chain runs to 94 residues: MLKPLGDRVVLKVEEKEQTVGGFVLAGSAQEKTKTAQVVATGQGVRTLNGDLVAPSVKTGDRVLVEAHAGLDVKDGDEKYIIVGEANILAIIEE.

It belongs to the GroES chaperonin family. In terms of assembly, heptamer of 7 subunits arranged in a ring. Interacts with the chaperonin GroEL.

Its subcellular location is the cytoplasm. Functionally, together with the chaperonin GroEL, plays an essential role in assisting protein folding. The GroEL-GroES system forms a nano-cage that allows encapsulation of the non-native substrate proteins and provides a physical environment optimized to promote and accelerate protein folding. GroES binds to the apical surface of the GroEL ring, thereby capping the opening of the GroEL channel. This chain is Co-chaperonin GroES, found in Streptococcus pneumoniae (strain Taiwan19F-14).